The primary structure comprises 604 residues: Lipoprotein LpqB (604 aa).

Positions M1–G27 are cleaved as a signal peptide. A lipid anchor (N-palmitoyl cysteine) is attached at C28. C28 is lipidated: S-diacylglycerol cysteine. Residues S35–D60 are disordered.

Belongs to the LpqB lipoprotein family.

It localises to the cell membrane. The protein is Lipoprotein LpqB of Nocardia farcinica (strain IFM 10152).